The sequence spans 822 residues: Serine/threonine-protein kinase kin-29 (822 aa).

The region spanning 16–267 (YDVGRAIGKG…IQNVLQHRWM (252 aa)) is the Protein kinase domain. ATP contacts are provided by residues 22–30 (IGKGNFATV) and Lys45. Asp138 functions as the Proton acceptor in the catalytic mechanism. 3 disordered regions span residues 348–367 (EGTG…LSGK), 389–423 (LSSP…RQFG), and 577–602 (NPIP…WASP). Over residues 394–406 (CDSDDSSNSDLCD) the composition is skewed to acidic residues.

It belongs to the protein kinase superfamily. CAMK Ser/Thr protein kinase family. SNF1 subfamily. Interacts with tax-6. Mg(2+) serves as cofactor. In terms of processing, autophosphorylated. Elevated cAMP levels appears to act via PKA to directly or indirectly phosphorylate multiple sites on kin-29 and inhibit function. Primarily neuronal, with additional expression in body wall muscle and hypodermal cells. Among neuronal cells, expressed in multiple sensory neurons and interneurons in the lateral, anterior, and lumbar ganglia, as well as in motor neurons in the ventral motor cord. Present in the AWB and AWC olfactory neurons.

Its subcellular location is the cytoplasm. The protein resides in the nucleus. The enzyme catalyses L-seryl-[protein] + ATP = O-phospho-L-seryl-[protein] + ADP + H(+). The catalysed reaction is L-threonyl-[protein] + ATP = O-phospho-L-threonyl-[protein] + ADP + H(+). In terms of biological role, regulates chemoreceptor expression by phosphorylating the hda-4 class II histone deacetylase (HDAC) and inhibiting the gene repression functions of hda-4 and the mef-2 transcription factor, enabling the correct sensing and transduction of food signals. Role in determining body size, the dauer decision and serotonin-mediated egg laying. May modulate the Sma/Mab pathway and regulates development in the later larval stages. This chain is Serine/threonine-protein kinase kin-29, found in Caenorhabditis elegans.